Reading from the N-terminus, the 556-residue chain is Neurofilament light polypeptide (556 aa).

Position 2 is an N-acetylserine (S2). The segment at 2–94 (SSYGYDPFFP…KSIRSQERAQ (93 aa)) is head. The IF rod domain occupies 91-402 (ERAQLQDLND…KLLEGEETRL (312 aa)). A coil 1A region spans residues 95-126 (LQDLNDRFACFIERVHELEQQNKVLEAELLVL). A linker 1 region spans residues 127-139 (RQKHAEPSRFRAL). Residues 140-235 (YEQEIRELRL…KVHEEELAEL (96 aa)) are coil 1B. The segment at 236–254 (QAQIQYAHLSVEMDVSAKP) is linker 12. The interval 255-273 (DLSAALRDIRAQYEKLAAR) is coil 2A. Positions 274 to 282 (NMQNAEEWF) are linker 2. The coil 2B stretch occupies residues 283–398 (RSRFTVLSES…AAYRKLLEGE (116 aa)). A tail, subdomain A region spans residues 399 to 445 (ETRLSFTSVGSITSGYTQTAPTFGRSAYSGLQSTSYLMTTRSFPTYY). A tail region spans residues 399-556 (ETRLSFTSVG…KEETEVKKKA (158 aa)). Residues 446–556 (SSHVQEEQIE…KEETEVKKKA (111 aa)) form a tail, subdomain B (acidic) region. Low complexity predominate over residues 464–473 (KAGEAKAAPA). Positions 464-556 (KAGEAKAAPA…KEETEVKKKA (93 aa)) are disordered. A compositionally biased stretch (acidic residues) spans 474-540 (EEGEEEEKEE…AEETGEEEKE (67 aa)). Basic and acidic residues predominate over residues 541-556 (EKEAAGKEETEVKKKA).

This sequence belongs to the intermediate filament family. As to quaternary structure, forms homodimers (in vitro).

It is found in the cell projection. It localises to the axon. The protein resides in the cytoplasm. Its subcellular location is the cytoskeleton. Its function is as follows. Neurofilaments usually contain three intermediate filament proteins: NEFL, NEFM, and NEFH which are involved in the maintenance of neuronal caliber. May additionally cooperate with the neuronal intermediate filament proteins to form neuronal filamentous networks. The sequence is that of Neurofilament light polypeptide (NEFL) from Coturnix japonica (Japanese quail).